A 249-amino-acid polypeptide reads, in one-letter code: Ribosomal RNA small subunit methyltransferase J (249 aa).

Position 169 (aspartate 169) interacts with S-adenosyl-L-methionine.

This sequence belongs to the methyltransferase superfamily. RsmJ family.

The protein resides in the cytoplasm. The enzyme catalyses guanosine(1516) in 16S rRNA + S-adenosyl-L-methionine = N(2)-methylguanosine(1516) in 16S rRNA + S-adenosyl-L-homocysteine + H(+). Functionally, specifically methylates the guanosine in position 1516 of 16S rRNA. This chain is Ribosomal RNA small subunit methyltransferase J, found in Buchnera aphidicola subsp. Schizaphis graminum (strain Sg).